Here is a 379-residue protein sequence, read N- to C-terminus: Carbamoyl phosphate synthase small chain (379 aa).

Residues 1-189 (MSKSALLVLE…GLPEAKDDSE (189 aa)) are CPSase. 3 residues coordinate L-glutamine: serine 47, glycine 241, and glycine 243. One can recognise a Glutamine amidotransferase type-1 domain in the interval 193–379 (HVVAYDFGAK…FIELIKQHSA (187 aa)). Cysteine 269 serves as the catalytic Nucleophile. L-glutamine contacts are provided by leucine 270, glutamine 273, asparagine 311, glycine 313, and phenylalanine 314. Residues histidine 353 and glutamate 355 contribute to the active site.

The protein belongs to the CarA family. Composed of two chains; the small (or glutamine) chain promotes the hydrolysis of glutamine to ammonia, which is used by the large (or ammonia) chain to synthesize carbamoyl phosphate. Tetramer of heterodimers (alpha,beta)4.

It carries out the reaction hydrogencarbonate + L-glutamine + 2 ATP + H2O = carbamoyl phosphate + L-glutamate + 2 ADP + phosphate + 2 H(+). It catalyses the reaction L-glutamine + H2O = L-glutamate + NH4(+). The protein operates within amino-acid biosynthesis; L-arginine biosynthesis; carbamoyl phosphate from bicarbonate: step 1/1. It functions in the pathway pyrimidine metabolism; UMP biosynthesis via de novo pathway; (S)-dihydroorotate from bicarbonate: step 1/3. Small subunit of the glutamine-dependent carbamoyl phosphate synthetase (CPSase). CPSase catalyzes the formation of carbamoyl phosphate from the ammonia moiety of glutamine, carbonate, and phosphate donated by ATP, constituting the first step of 2 biosynthetic pathways, one leading to arginine and/or urea and the other to pyrimidine nucleotides. The small subunit (glutamine amidotransferase) binds and cleaves glutamine to supply the large subunit with the substrate ammonia. The chain is Carbamoyl phosphate synthase small chain from Vibrio vulnificus (strain YJ016).